The primary structure comprises 674 residues: DNA ligase (674 aa).

NAD(+)-binding positions include 42–46 (DNVYD), 91–92 (SM), and E121. The active-site N6-AMP-lysine intermediate is the K123. Residues R144, E178, K294, and K318 each contribute to the NAD(+) site. Zn(2+)-binding residues include C412, C415, C430, and C435. A BRCT domain is found at 596–674 (VKDSFVAGKT…ETELLANLKD (79 aa)).

Belongs to the NAD-dependent DNA ligase family. LigA subfamily. Requires Mg(2+) as cofactor. Mn(2+) serves as cofactor.

It carries out the reaction NAD(+) + (deoxyribonucleotide)n-3'-hydroxyl + 5'-phospho-(deoxyribonucleotide)m = (deoxyribonucleotide)n+m + AMP + beta-nicotinamide D-nucleotide.. Functionally, DNA ligase that catalyzes the formation of phosphodiester linkages between 5'-phosphoryl and 3'-hydroxyl groups in double-stranded DNA using NAD as a coenzyme and as the energy source for the reaction. It is essential for DNA replication and repair of damaged DNA. This Lacticaseibacillus paracasei (strain ATCC 334 / BCRC 17002 / CCUG 31169 / CIP 107868 / KCTC 3260 / NRRL B-441) (Lactobacillus paracasei) protein is DNA ligase.